A 255-amino-acid chain; its full sequence is 4-diphosphocytidyl-2-C-methyl-D-erythritol kinase (255 aa).

Residue K6 is part of the active site. Residue 95-105 coordinates ATP; the sequence is PVCAGLGGGSS. D137 is an active-site residue.

It belongs to the GHMP kinase family. IspE subfamily.

The catalysed reaction is 4-CDP-2-C-methyl-D-erythritol + ATP = 4-CDP-2-C-methyl-D-erythritol 2-phosphate + ADP + H(+). The protein operates within isoprenoid biosynthesis; isopentenyl diphosphate biosynthesis via DXP pathway; isopentenyl diphosphate from 1-deoxy-D-xylulose 5-phosphate: step 3/6. Catalyzes the phosphorylation of the position 2 hydroxy group of 4-diphosphocytidyl-2C-methyl-D-erythritol. In Campylobacter jejuni subsp. jejuni serotype O:23/36 (strain 81-176), this protein is 4-diphosphocytidyl-2-C-methyl-D-erythritol kinase.